The following is a 348-amino-acid chain: Phospho-2-dehydro-3-deoxyheptonate aldolase, Trp-sensitive (348 aa).

This sequence belongs to the class-I DAHP synthase family.

It catalyses the reaction D-erythrose 4-phosphate + phosphoenolpyruvate + H2O = 7-phospho-2-dehydro-3-deoxy-D-arabino-heptonate + phosphate. Its pathway is metabolic intermediate biosynthesis; chorismate biosynthesis; chorismate from D-erythrose 4-phosphate and phosphoenolpyruvate: step 1/7. Stereospecific condensation of phosphoenolpyruvate (PEP) and D-erythrose-4-phosphate (E4P) giving rise to 3-deoxy-D-arabino-heptulosonate-7-phosphate (DAHP). The polypeptide is Phospho-2-dehydro-3-deoxyheptonate aldolase, Trp-sensitive (aroH) (Enterobacter agglomerans (Erwinia herbicola)).